A 424-amino-acid chain; its full sequence is Enolase (424 aa).

Gln162 contacts (2R)-2-phosphoglycerate. The Proton donor role is filled by Glu204. The Mg(2+) site is built by Asp241, Glu284, and Asp311. Lys336, Arg365, Ser366, and Lys387 together coordinate (2R)-2-phosphoglycerate. Lys336 functions as the Proton acceptor in the catalytic mechanism.

This sequence belongs to the enolase family. It depends on Mg(2+) as a cofactor.

The protein resides in the cytoplasm. Its subcellular location is the secreted. It is found in the cell surface. The enzyme catalyses (2R)-2-phosphoglycerate = phosphoenolpyruvate + H2O. Its pathway is carbohydrate degradation; glycolysis; pyruvate from D-glyceraldehyde 3-phosphate: step 4/5. Catalyzes the reversible conversion of 2-phosphoglycerate (2-PG) into phosphoenolpyruvate (PEP). It is essential for the degradation of carbohydrates via glycolysis. This Sinorhizobium fredii (strain NBRC 101917 / NGR234) protein is Enolase.